Consider the following 542-residue polypeptide: ATP synthase subunit alpha (542 aa).

173-180 (GDRQTGKT) contributes to the ATP binding site. A disordered region spans residues 518–542 (PLVEKKPDEKHTTPVEQEKIVAGEK). A compositionally biased stretch (basic and acidic residues) spans 519 to 542 (LVEKKPDEKHTTPVEQEKIVAGEK).

The protein belongs to the ATPase alpha/beta chains family. In terms of assembly, F-type ATPases have 2 components, CF(1) - the catalytic core - and CF(0) - the membrane proton channel. CF(1) has five subunits: alpha(3), beta(3), gamma(1), delta(1), epsilon(1). CF(0) has three main subunits: a(1), b(2) and c(9-12). The alpha and beta chains form an alternating ring which encloses part of the gamma chain. CF(1) is attached to CF(0) by a central stalk formed by the gamma and epsilon chains, while a peripheral stalk is formed by the delta and b chains.

It localises to the cell membrane. It carries out the reaction ATP + H2O + 4 H(+)(in) = ADP + phosphate + 5 H(+)(out). Functionally, produces ATP from ADP in the presence of a proton gradient across the membrane. The alpha chain is a regulatory subunit. This chain is ATP synthase subunit alpha, found in Bifidobacterium adolescentis (strain ATCC 15703 / DSM 20083 / NCTC 11814 / E194a).